The sequence spans 1791 residues: Sodium channel protein type 11 subunit alpha (1791 aa).

Residues 1–126 lie on the Cytoplasmic side of the membrane; sequence MDDRCYPVIF…SIRSLAIRVS (126 aa). The stretch at 115–408 is one I repeat; sequence FNSIRSLAIR…VTMAYEEQNK (294 aa). A helical transmembrane segment spans residues 127–148; the sequence is VHSLFSMFIIGTVIINCVFMAT. Residues 149 to 156 are Extracellular-facing; that stretch reads GPAKNSNS. The helical transmembrane segment at 157 to 180 threads the bilayer; that stretch reads NNTDIAECVFTGIYIFEALIKILA. Residues 181–192 lie on the Cytoplasmic side of the membrane; that stretch reads RGFILDEFSFLR. Residues 193-212 form a helical membrane-spanning segment; that stretch reads DPWNWLDSIVIGIAIVSYIP. The Extracellular portion of the chain corresponds to 213–219; the sequence is GITIKLL. Residues 220–239 traverse the membrane as a helical; Voltage-sensor segment; it reads PLRTFRVFRALKAISVVSRL. Over 240 to 255 the chain is Cytoplasmic; that stretch reads KVIVGALLRSVKKLVN. Residues 256 to 269 form a helical membrane-spanning segment; sequence VIILTFFCLSIFAL. Residues 270 to 344 lie on the Extracellular side of the membrane; it reads VGQQLFMGSL…PDYNYTNFDN (75 aa). C283 and C322 are joined by a disulfide. 2 N-linked (GlcNAc...) asparagine glycosylation sites follow: N290 and N338. The pore-forming intramembrane region spans 345–369; sequence FGWSFLAMFRLMTQDSWEKLYQQTL. Residues 370–376 lie on the Extracellular side of the membrane; sequence RTTGLYS. The chain crosses the membrane as a helical span at residues 377–402; that stretch reads VFFFIVVIFLGSFYLINLTLAVVTMA. Residues 403–572 are Cytoplasmic-facing; the sequence is YEEQNKNVAA…WLCVKKVLRT (170 aa). One copy of the II repeat lies at 559-833; sequence CCPQWLCVKK…EGEARKTKVQ (275 aa). Residues 573 to 596 traverse the membrane as a helical segment; it reads VMTDPFTELAITICIIINTVFLAM. Over 597–607 the chain is Extracellular; sequence EHHKMEASFEK. Residues 608 to 631 form a helical membrane-spanning segment; that stretch reads MLNIGNLVFTSIFIAEMCLKIIAL. Topologically, residues 632–639 are cytoplasmic; the sequence is DPYHYFRR. A helical membrane pass occupies residues 640 to 659; it reads GWNIFDSIVALLSFADVMNC. The Extracellular segment spans residues 660 to 667; the sequence is VLQKRSWP. A helical; Voltage-sensor membrane pass occupies residues 668-687; the sequence is FLRSFRVLRVFKLAKSWPTL. Residues 688–702 are Cytoplasmic-facing; that stretch reads NTLIKIIGNSVGALG. The chain crosses the membrane as a helical span at residues 703-725; that stretch reads SLTVVLVIVIFIFSVVGMQLFGR. At 726–753 the chain is on the extracellular side; that stretch reads SFNSQKSPKLCNPTGPTVSCLRHWHMGD. An intramembrane region (pore-forming) is located at residues 754-774; the sequence is FWHSFLVVFRILCGEWIENMW. The Extracellular segment spans residues 775–785; that stretch reads ECMQEANASSS. An intrachain disulfide couples C776 to C787. N-linked (GlcNAc...) asparagine glycosylation is present at N781. A helical transmembrane segment spans residues 786 to 811; it reads LCVIVFILITVIGKLVVLNLFIALLL. The Cytoplasmic portion of the chain corresponds to 812–1051; that stretch reads NSFSNEERNG…WWNLRKTCYQ (240 aa). The III repeat unit spans residues 1044–1339; sequence NLRKTCYQIV…KKYYNAMKKL (296 aa). Residues 1052 to 1074 traverse the membrane as a helical segment; that stretch reads IVKHSWFESFIIFVILLSSGALI. The Extracellular portion of the chain corresponds to 1075-1088; the sequence is FEDVHLENQPKIQE. Residues 1089 to 1114 traverse the membrane as a helical segment; sequence LLNCTDIIFTHIFILEMVLKWVAFGF. The Cytoplasmic segment spans residues 1115 to 1120; that stretch reads GKYFTS. A helical membrane pass occupies residues 1121-1138; the sequence is AWCCLDFIIVIVSVTTLI. A topological domain (extracellular) is located at residue N1139. A helical; Voltage-sensor membrane pass occupies residues 1140–1161; the sequence is LMELKSFRTLRALRPLRALSQF. Over 1162–1180 the chain is Cytoplasmic; the sequence is EGMKVVVNALIGAIPAILN. A helical membrane pass occupies residues 1181–1202; sequence VLLVCLIFWLVFCILGVYFFSG. Topologically, residues 1203 to 1243 are extracellular; sequence KFGKCINGTDSVINYTIITNKSQCESGNFSWINQKVNFDNV. Residues N1209, N1216, N1222, and N1230 are each glycosylated (N-linked (GlcNAc...) asparagine). Residues 1244 to 1265 constitute an intramembrane region (pore-forming); it reads GNAYLALLQVATFKGWMDIIYA. Topologically, residues 1266–1281 are extracellular; it reads AVDSTEKEQQPEFESN. The chain crosses the membrane as a helical span at residues 1282–1308; the sequence is SLGYIYFVVFIIFGSFFTLNLFIGVII. Residues 1309-1361 are Cytoplasmic-facing; sequence DNFNQQQKKLGGQDIFMTEEQKKYYNAMKKLGSKKPQKPIPRPLNKCQGLVFD. One copy of the IV repeat lies at 1348–1639; the sequence is IPRPLNKCQG…WEKFDPEATQ (292 aa). Residues 1362 to 1385 traverse the membrane as a helical segment; the sequence is IVTSQIFDIIIISLIILNMISMMA. Residues 1386-1396 are Extracellular-facing; the sequence is ESYNQPKAMKS. The chain crosses the membrane as a helical span at residues 1397 to 1420; sequence ILDHLNWVFVVIFTLECLIKIFAL. The Cytoplasmic portion of the chain corresponds to 1421-1426; the sequence is RQYYFT. Residues 1427 to 1450 traverse the membrane as a helical segment; that stretch reads NGWNLFDCVVVLLSIVSTMISTLE. Residues 1451-1461 are Extracellular-facing; it reads NQEHIPFPPTL. Residues 1462 to 1484 form a helical; Voltage-sensor membrane-spanning segment; sequence FRIVRLARIGRILRLVRAARGIR. At 1485–1499 the chain is on the cytoplasmic side; that stretch reads TLLFALMMSLPSLFN. Residues 1500-1522 form a helical membrane-spanning segment; that stretch reads IGLLLFLIMFIYAILGMNWFSKV. At 1523-1536 the chain is on the extracellular side; the sequence is NPESGIDDIFNFKT. The segment at residues 1537–1559 is an intramembrane region (pore-forming); the sequence is FASSMLCLFQISTSAGWDSLLSP. Residues 1560 to 1579 lie on the Extracellular side of the membrane; sequence MLRSKESCNSSSENCHLPGI. N1568 carries an N-linked (GlcNAc...) asparagine glycan. The chain crosses the membrane as a helical span at residues 1580-1604; sequence ATSYFVSYIIISFLIVVNMYIAVIL. At 1605–1791 the chain is on the cytoplasmic side; it reads ENFNTATEES…GVAKGKVHCD (187 aa).

The protein belongs to the sodium channel (TC 1.A.1.10) family. Nav1.9/SCN11A subfamily. As to quaternary structure, the voltage-resistant sodium channel consists of an ion conducting pore forming alpha-subunit regulated by one or more auxiliary subunits SCN1B, SCN2B and SCN3B. In terms of tissue distribution, expressed in the dorsal root ganglia and trigeminal ganglia, olfactory bulb, hippocampus, cerebellar cortex, spinal cord, spleen, small intestine and placenta.

It is found in the cell membrane. The enzyme catalyses Na(+)(in) = Na(+)(out). With respect to regulation, activity is not sensitive to inhibition by tetrodotoxin. Sodium channel mediating the voltage-dependent sodium ion permeability of excitable membranes. Assuming opened or closed conformations in response to the voltage difference across the membrane, the protein forms a sodium-selective channel through which sodium ions may pass in accordance with their electrochemical gradient. Involved in membrane depolarization during action potential in nociceptors which function as key relay stations for the electrical transmission of pain signals from the periphery to the central nervous system. Also involved in rapid BDNF-evoked neuronal depolarization. This is Sodium channel protein type 11 subunit alpha from Homo sapiens (Human).